We begin with the raw amino-acid sequence, 362 residues long: Probable S-adenosylmethionine-dependent methyltransferase At5g37970 (362 aa).

Residues tyrosine 19, cysteine 66, asparagine 71, aspartate 107, serine 136, and phenylalanine 137 each coordinate S-adenosyl-L-homocysteine. The Mg(2+) site is built by asparagine 175, glutamate 261, and phenylalanine 263.

The protein belongs to the methyltransferase superfamily. Type-7 methyltransferase family. As to quaternary structure, homodimer. The cofactor is Mg(2+).

This chain is Probable S-adenosylmethionine-dependent methyltransferase At5g37970, found in Arabidopsis thaliana (Mouse-ear cress).